A 172-amino-acid chain; its full sequence is Shikimate kinase (172 aa).

17–22 is an ATP binding site; sequence GTGKST. Serine 21 lines the Mg(2+) pocket. The substrate site is built by aspartate 39, arginine 63, and glycine 84. An ATP-binding site is contributed by arginine 122. Position 140 (arginine 140) interacts with substrate.

This sequence belongs to the shikimate kinase family. In terms of assembly, monomer. The cofactor is Mg(2+).

Its subcellular location is the cytoplasm. The catalysed reaction is shikimate + ATP = 3-phosphoshikimate + ADP + H(+). It functions in the pathway metabolic intermediate biosynthesis; chorismate biosynthesis; chorismate from D-erythrose 4-phosphate and phosphoenolpyruvate: step 5/7. Functionally, catalyzes the specific phosphorylation of the 3-hydroxyl group of shikimic acid using ATP as a cosubstrate. The protein is Shikimate kinase of Staphylococcus haemolyticus (strain JCSC1435).